A 338-amino-acid polypeptide reads, in one-letter code: POU domain, class 4, transcription factor 3 (338 aa).

The POU-IV box signature appears at 56–65 (RAEALAAVDI). A POU-specific domain is found at 179–256 (DVESDPRELE…VLQAWLEEAE (78 aa)). The segment at residues 274–333 (RKRKRTSIAAPEKRSLEAYFAIQPRPSSEKIAAIAEKLDLKKNVVRVWFCNQRQKQKRMK) is a DNA-binding region (homeobox).

The protein belongs to the POU transcription factor family. Class-4 subfamily. In terms of assembly, interacts with ISL1. As to expression, brain. Seems to be specific to the retina.

The protein resides in the nucleus. It is found in the cytoplasm. Acts as a transcriptional activator. Acts by binding to sequences related to the consensus octamer motif 5'-ATGCAAAT-3' in the regulatory regions of its target genes. Involved in the auditory system development, required for terminal differentiation of hair cells in the inner ear. The polypeptide is POU domain, class 4, transcription factor 3 (POU4F3) (Homo sapiens (Human)).